Reading from the N-terminus, the 202-residue chain is Adenylate kinase (202 aa).

Position 12–20 (12–20 (GVPGVGKTT)) interacts with ATP.

This sequence belongs to the archaeal adenylate kinase family.

It localises to the cytoplasm. The catalysed reaction is AMP + ATP = 2 ADP. This chain is Adenylate kinase (adkA), found in Aeropyrum pernix (strain ATCC 700893 / DSM 11879 / JCM 9820 / NBRC 100138 / K1).